A 321-amino-acid chain; its full sequence is Transcription factor MYB60 (321 aa).

2 HTH myb-type domains span residues 9-65 (KVGI…RPGI) and 66-116 (KRGN…KKKI). 2 consecutive DNA-binding regions (H-T-H motif) follow at residues 37-61 (WRSV…TNYL) and 89-112 (WAAI…NTHL). S-nitrosocysteine is present on residues C49 and C53. Disordered regions lie at residues 196–215 (SPKA…EGSI) and 263–291 (HHQT…QKKH). Polar residues predominate over residues 206–215 (QNSSLEEGSI). Residues 273–290 (SDDHDHDHEMKMDHDQKK) are compositionally biased toward basic and acidic residues.

Restricted to stomatal guard cells. Mostly expressed in leaves, cotyledons, hypocotyls, seeds and ripened berry skins.

It localises to the nucleus. Transcription factor involved in the regulation of gene (e.g. drought-regulated and flavonoid biosynthetic genes) expression and stomatal movements leading to negative regulation of responses to drought and responses to other physiological stimuli (e.g. light). In Vitis vinifera (Grape), this protein is Transcription factor MYB60.